Reading from the N-terminus, the 318-residue chain is Dehydration-responsive element-binding protein 2E (318 aa).

The segment covering M1 to T15 has biased composition (basic residues). The segment at M1–A24 is disordered. Residues E27–P84 constitute a DNA-binding region (AP2/ERF). Residues E140–S178 form a disordered region. Pro residues predominate over residues T149 to T168.

This sequence belongs to the AP2/ERF transcription factor family. ERF subfamily.

Its subcellular location is the nucleus. In terms of biological role, probable transcriptional activator that binds to the DNA sequence 5'-[AG]CCGAC-3' of the cis-acting dehydration-responsive element (DRE). In Oryza sativa subsp. japonica (Rice), this protein is Dehydration-responsive element-binding protein 2E (DREB2E).